Reading from the N-terminus, the 399-residue chain is Chorismate synthase (399 aa).

2 residues coordinate NADP(+): arginine 40 and arginine 46. FMN contacts are provided by residues 134 to 136, 255 to 256, glycine 299, 314 to 318, and arginine 340; these read RAS, QA, and KPIST.

It belongs to the chorismate synthase family. In terms of assembly, homotetramer. FMNH2 is required as a cofactor.

It carries out the reaction 5-O-(1-carboxyvinyl)-3-phosphoshikimate = chorismate + phosphate. It participates in metabolic intermediate biosynthesis; chorismate biosynthesis; chorismate from D-erythrose 4-phosphate and phosphoenolpyruvate: step 7/7. Its function is as follows. Catalyzes the anti-1,4-elimination of the C-3 phosphate and the C-6 proR hydrogen from 5-enolpyruvylshikimate-3-phosphate (EPSP) to yield chorismate, which is the branch point compound that serves as the starting substrate for the three terminal pathways of aromatic amino acid biosynthesis. This reaction introduces a second double bond into the aromatic ring system. The protein is Chorismate synthase of Mycolicibacterium smegmatis (strain ATCC 700084 / mc(2)155) (Mycobacterium smegmatis).